The sequence spans 305 residues: Leucine-rich repeat-containing protein 25 (305 aa).

The signal sequence occupies residues 1–20 (MGGTLAWTLLLPLLLRESDS). The Extracellular segment spans residues 21-165 (LEPSCTVSSA…SCAPGLASAT (145 aa)). LRR repeat units follow at residues 39–59 (SATCLNFSGLSLSLPHNQSLR), 62–83 (NVILLDLSGNGLRELPVTFFAH), and 86–107 (KLEVLNVLRNPLSRVDGALAAR). N-linked (GlcNAc...) asparagine glycosylation is found at Asn-44 and Asn-55. 2 N-linked (GlcNAc...) asparagine glycosylation sites follow: Asn-130 and Asn-148. A helical transmembrane segment spans residues 166-186 (IGAVVVSGCLLLGLAIAGPVL). Residues 187–305 (AWRLWRCRVA…DEEEYVIPGH (119 aa)) lie on the Cytoplasmic side of the membrane. Positions 204 to 229 (PWAAQDGPKPGLGLQPRYGSRSAPKP) are disordered. Tyr-284 bears the Phosphotyrosine mark.

Interacts with RIGI. Interacts with SQSTM1. Interacts with p65/RELA; this interaction promotes the degradation of RELA through autophagy. In terms of tissue distribution, expressed in plasmacytoid dendritic cells (PDC), monocyte-derived dendritic cells (MDDC), granulocytes, monocytes, B-lymphocytes, peripheral blood leukocytes, spleen, bone marrow, and, to a lesser extent, lymph nodes, fetal liver, and appendix but not in thymus.

The protein resides in the membrane. It localises to the cytoplasm. Plays a role in the inhibition of RLR-mediated type I interferon signaling pathway by targeting RIGI for autophagic degradation. Interacts specifically with ISG15-associated RIGI to promote interaction between RIGI and the autophagic cargo receptor p62/SQSTM1 to mediate RIGI degradation via selective autophagy. Also plays a role in the inhibition of NF-kappa-B signaling pathway and inflammatory response by promoting the degradation of p65/RELA. The sequence is that of Leucine-rich repeat-containing protein 25 (LRRC25) from Homo sapiens (Human).